The chain runs to 869 residues: Histone deacetylase 4 (869 aa).

3 disordered regions span residues 1–25 (MEEA…PSTS), 128–167 (SSSN…TISQ), and 180–218 (RSKG…QVNV). Over residues 184-202 (ESNSQSNLMSNSVTANGNG) the composition is skewed to polar residues. Serine 251 carries the phosphoserine modification. Residues 460–802 (CTTGLGYDQA…VQALIGESDD (343 aa)) form a histone deacetylase region. Histidine 608 is a catalytic residue.

The protein belongs to the histone deacetylase family. HD type 2 subfamily. As to quaternary structure, interacts with mef-2. Post-translationally, phosphorylated by serine/threonine-protein kinase kin-29 at Ser-251; the phosphorylation inhibits repression of transcription by mef-2. May be phosphorylated by either cyclic-AMP dependent or cyclic-GMP dependent protein kinases. In terms of tissue distribution, expressed in body-wall muscle cells, hypodermal seam cells and neuronal cells including sensory amphid neuronal processes, the nerve ring, ventral nerve cords and motor neuronal commissures.

The protein resides in the nucleus. The enzyme catalyses N(6)-acetyl-L-lysyl-[histone] + H2O = L-lysyl-[histone] + acetate. In terms of biological role, responsible for the deacetylation of lysine residues on the N-terminal part of the core histones (H2A, H2B, H3 and H4). Histone deacetylation gives a tag for epigenetic repression and plays an important role in transcriptional regulation, cell cycle progression and developmental events. Histone deacetylases act via the formation of large multiprotein complexes. Involved in transduction of sensory signals, together with egl-4, kin-29 and mef-2; binding to transcription factor mef-2 enables negative modulation of chemoreceptor gene expression in chemosensory neurons. May be involved in muscle development. The protein is Histone deacetylase 4 (hda-4) of Caenorhabditis elegans.